The chain runs to 557 residues: Tripeptidyl-peptidase 1 (557 aa).

Residues 1–16 form the signal peptide; that stretch reads MRVAVFVLSFIWLVNG. The propeptide at 17–190 is removed in mature form; the sequence is ELLEADQDAV…WEGARQAILG (174 aa). N53 carries an N-linked (GlcNAc...) asparagine glycan. A disulfide bond links C107 and C118. Residues 194–557 enclose the Peptidase S53 domain; sequence GVTPAVIRNR…YPVFLASLMD (364 aa). N205 and N216 each carry an N-linked (GlcNAc...) asparagine glycan. Active-site charge relay system residues include E266 and D270. 3 N-linked (GlcNAc...) asparagine glycosylation sites follow: N280, N307, and N438. 2 cysteine pairs are disulfide-bonded: C359/C521 and C517/C532. S470 functions as the Charge relay system in the catalytic mechanism. Ca(2+)-binding residues include D512 and V513. D538 lines the Ca(2+) pocket.

The cofactor is Ca(2+). In terms of processing, activated by autocatalytic proteolytical processing.

The protein localises to the lysosome. It catalyses the reaction Release of an N-terminal tripeptide from a polypeptide, but also has endopeptidase activity.. Functionally, lysosomal serine protease with tripeptidyl-peptidase I activity. May act as a non-specific lysosomal peptidase which generates tripeptides from the breakdown products produced by lysosomal proteinases. Requires substrates with an unsubstituted N-terminus. The protein is Tripeptidyl-peptidase 1 of Danio rerio (Zebrafish).